The chain runs to 549 residues: Glucose-6-phosphate isomerase (549 aa).

The active-site Proton donor is the E352. Catalysis depends on residues H383 and K511.

This sequence belongs to the GPI family.

It localises to the cytoplasm. It carries out the reaction alpha-D-glucose 6-phosphate = beta-D-fructose 6-phosphate. It participates in carbohydrate biosynthesis; gluconeogenesis. Its pathway is carbohydrate degradation; glycolysis; D-glyceraldehyde 3-phosphate and glycerone phosphate from D-glucose: step 2/4. Its function is as follows. Catalyzes the reversible isomerization of glucose-6-phosphate to fructose-6-phosphate. The protein is Glucose-6-phosphate isomerase of Methylocella silvestris (strain DSM 15510 / CIP 108128 / LMG 27833 / NCIMB 13906 / BL2).